Consider the following 466-residue polypeptide: tRNA modification GTPase MnmE (466 aa).

Residues Arg-22, Glu-87, and Arg-126 each coordinate (6S)-5-formyl-5,6,7,8-tetrahydrofolate. One can recognise a TrmE-type G domain in the interval Gly-222–Tyr-382. Asn-232 provides a ligand contact to K(+). Residues Asn-232–Ser-237, Thr-251–Thr-257, and Asp-276–Gly-279 each bind GTP. Ser-236 provides a ligand contact to Mg(2+). K(+) contacts are provided by Thr-251, Ile-253, and Thr-256. Mg(2+) is bound at residue Thr-257. Lys-466 is a binding site for (6S)-5-formyl-5,6,7,8-tetrahydrofolate.

This sequence belongs to the TRAFAC class TrmE-Era-EngA-EngB-Septin-like GTPase superfamily. TrmE GTPase family. In terms of assembly, homodimer. Heterotetramer of two MnmE and two MnmG subunits. Requires K(+) as cofactor.

It is found in the cytoplasm. Exhibits a very high intrinsic GTPase hydrolysis rate. Involved in the addition of a carboxymethylaminomethyl (cmnm) group at the wobble position (U34) of certain tRNAs, forming tRNA-cmnm(5)s(2)U34. The protein is tRNA modification GTPase MnmE of Heliobacterium modesticaldum (strain ATCC 51547 / Ice1).